Consider the following 155-residue polypeptide: Small ribosomal subunit protein uS9 (155 aa).

Belongs to the universal ribosomal protein uS9 family.

This Sinorhizobium fredii (strain NBRC 101917 / NGR234) protein is Small ribosomal subunit protein uS9.